Consider the following 103-residue polypeptide: BLOC-1-related complex subunit 7 (103 aa).

It belongs to the BORCS7 family.

The protein localises to the lysosome membrane. Functionally, as part of a BORC-like complex may play a role in lysosomes movement and localization at the cell periphery. Associated with the cytosolic face of lysosomes, this complex may couple lysosomes to microtubule plus-end-directed kinesin motor. The polypeptide is BLOC-1-related complex subunit 7 (Danio rerio (Zebrafish)).